Reading from the N-terminus, the 109-residue chain is Spermidine export protein MdtI (109 aa).

Helical transmembrane passes span 6-26 (WIHG…NVLL), 36-56 (CYGI…SQAV), 64-84 (AYAL…WVLF), and 88-108 (LNPK…MIKF).

It belongs to the drug/metabolite transporter (DMT) superfamily. Small multidrug resistance (SMR) (TC 2.A.7.1) family. MdtI subfamily. In terms of assembly, forms a complex with MdtJ.

The protein localises to the cell inner membrane. In terms of biological role, catalyzes the excretion of spermidine. This Salmonella paratyphi A (strain ATCC 9150 / SARB42) protein is Spermidine export protein MdtI.